The primary structure comprises 217 residues: Probable GTP-binding protein EngB (217 aa).

An EngB-type G domain is found at 40–217; it reads DVPEIAFAGR…RAAVLQDAMG (178 aa). GTP contacts are provided by residues 48–55, 75–79, 95–98, 162–165, and 196–198; these read GRSNVGKS, GRTQE, DMPG, TKAD, and TSS. Positions 55 and 77 each coordinate Mg(2+).

It belongs to the TRAFAC class TrmE-Era-EngA-EngB-Septin-like GTPase superfamily. EngB GTPase family. Mg(2+) is required as a cofactor.

Functionally, necessary for normal cell division and for the maintenance of normal septation. This is Probable GTP-binding protein EngB from Novosphingobium aromaticivorans (strain ATCC 700278 / DSM 12444 / CCUG 56034 / CIP 105152 / NBRC 16084 / F199).